The sequence spans 396 residues: Elongation factor Tu (396 aa).

In terms of domain architecture, tr-type G spans 10 to 206 (KPHVNVGTIG…ALDTFIPEPT (197 aa)). Positions 19–26 (GHVDHGKT) are G1. 19 to 26 (GHVDHGKT) is a binding site for GTP. Position 26 (T26) interacts with Mg(2+). The G2 stretch occupies residues 60–64 (GITIS). The segment at 81–84 (DCPG) is G3. GTP is bound by residues 81–85 (DCPGH) and 136–139 (NKAD). The segment at 136-139 (NKAD) is G4. The segment at 174-176 (SAR) is G5.

This sequence belongs to the TRAFAC class translation factor GTPase superfamily. Classic translation factor GTPase family. EF-Tu/EF-1A subfamily. In terms of assembly, monomer.

It is found in the cytoplasm. It catalyses the reaction GTP + H2O = GDP + phosphate + H(+). In terms of biological role, GTP hydrolase that promotes the GTP-dependent binding of aminoacyl-tRNA to the A-site of ribosomes during protein biosynthesis. The sequence is that of Elongation factor Tu from Xanthomonas oryzae pv. oryzae (strain MAFF 311018).